The following is a 520-amino-acid chain: Cysteine--tRNA ligase (520 aa).

Residue cysteine 29 participates in Zn(2+) binding. The 'HIGH' region signature appears at 31–41; sequence PTVYNYPHLGN. Zn(2+) contacts are provided by cysteine 227, histidine 252, and glutamate 256. Positions 301–305 match the 'KMSKS' region motif; the sequence is KMSKS. Lysine 304 is a binding site for ATP.

Belongs to the class-I aminoacyl-tRNA synthetase family. In terms of assembly, monomer. Zn(2+) serves as cofactor.

It is found in the cytoplasm. The enzyme catalyses tRNA(Cys) + L-cysteine + ATP = L-cysteinyl-tRNA(Cys) + AMP + diphosphate. The polypeptide is Cysteine--tRNA ligase (cysS) (Treponema pallidum (strain Nichols)).